The following is a 199-amino-acid chain: MLLPDLHPYTILLSIFLVLVAKQLVATIGKSTIQEFVWLVYLKVSSNQSIKTYNSKQHELHETNRQKRAISAQDEYAKWTKLNRQADKLSAELQKLNQEIQQQKSSIDKASNALILVLTTLPIWIARVFYRKTHLFYIRQGIFPKYVEWVLALPFLPNGAVGLTIWMFAVNSVVSNFSFLVSFPFAKRVSKPVRDTKVE.

The Lumenal portion of the chain corresponds to 1 to 11; that stretch reads MLLPDLHPYTI. The chain crosses the membrane as a helical span at residues 12 to 31; the sequence is LLSIFLVLVAKQLVATIGKS. Over 32–115 the chain is Cytoplasmic; it reads TIQEFVWLVY…SIDKASNALI (84 aa). Residues 76 to 116 adopt a coiled-coil conformation; it reads YAKWTKLNRQADKLSAELQKLNQEIQQQKSSIDKASNALIL. The helical transmembrane segment at 116–136 threads the bilayer; that stretch reads LVLTTLPIWIARVFYRKTHLF. Residues 137–160 lie on the Lumenal side of the membrane; it reads YIRQGIFPKYVEWVLALPFLPNGA. The helical transmembrane segment at 161 to 177 threads the bilayer; that stretch reads VGLTIWMFAVNSVVSNF. Topologically, residues 178–199 are cytoplasmic; it reads SFLVSFPFAKRVSKPVRDTKVE.

It belongs to the WRB/GET1 family. In terms of assembly, component of the Golgi to ER traffic (GET) complex, which is composed of GET1, GET2 and GET3. Within the complex, GET1 and GET2 form a heterotetramer which is stabilized by phosphatidylinositol binding and which binds to the GET3 homodimer.

It localises to the endoplasmic reticulum membrane. Its subcellular location is the golgi apparatus membrane. Its function is as follows. Required for the post-translational delivery of tail-anchored (TA) proteins to the endoplasmic reticulum. Together with GET2, acts as a membrane receptor for soluble GET3, which recognizes and selectively binds the transmembrane domain of TA proteins in the cytosol. The GET complex cooperates with the HDEL receptor ERD2 to mediate the ATP-dependent retrieval of resident ER proteins that contain a C-terminal H-D-E-L retention signal from the Golgi to the ER. The chain is Golgi to ER traffic protein 1 from Candida albicans (strain SC5314 / ATCC MYA-2876) (Yeast).